Reading from the N-terminus, the 317-residue chain is Cyclin-T1-3 (317 aa).

This sequence belongs to the cyclin family. Cyclin T subfamily. Interacts with CDKC-1 and CDKC-2. In terms of tissue distribution, abundantly expressed in flowers. Expressed in roots, seedlings, rosettes and stems.

The protein is Cyclin-T1-3 (CYCT1-3) of Arabidopsis thaliana (Mouse-ear cress).